A 118-amino-acid chain; its full sequence is Small ribosomal subunit protein uS13 (118 aa).

The interval 94–118 is disordered; sequence GLPVRGQRTKTNARTRKGPRKPIKK.

This sequence belongs to the universal ribosomal protein uS13 family. In terms of assembly, part of the 30S ribosomal subunit. Forms a loose heterodimer with protein S19. Forms two bridges to the 50S subunit in the 70S ribosome.

Located at the top of the head of the 30S subunit, it contacts several helices of the 16S rRNA. In the 70S ribosome it contacts the 23S rRNA (bridge B1a) and protein L5 of the 50S subunit (bridge B1b), connecting the 2 subunits; these bridges are implicated in subunit movement. Contacts the tRNAs in the A and P-sites. In Salmonella paratyphi A (strain ATCC 9150 / SARB42), this protein is Small ribosomal subunit protein uS13.